Consider the following 167-residue polypeptide: Phospholipase A2 imperatoxin-1 (167 aa).

Residues Trp38, Gly40, and Gly42 each contribute to the Ca(2+) site. 5 disulfides stabilise this stretch: Cys39/Cys61, Cys60/Cys99, Cys67/Cys92, Cys90/Cys127, and Cys132/Cys144. His64 is an active-site residue. Asp65 is a binding site for Ca(2+). The N-linked (GlcNAc...) asparagine glycan is linked to Asn102. Positions 136-140 (RRLAR) are excised as a propeptide.

The protein belongs to the phospholipase A2 family. Group III subfamily. In terms of assembly, heterodimer composed of a large subunit and a small subunit; disulfide-linked. Ca(2+) serves as cofactor. Expressed by the venom gland.

It localises to the secreted. The enzyme catalyses a 1,2-diacyl-sn-glycero-3-phosphocholine + H2O = a 1-acyl-sn-glycero-3-phosphocholine + a fatty acid + H(+). Phospholipase toxin, which may catalyze the calcium-dependent hydrolysis of the 2-acyl groups in 3-sn-phosphoglycerides. Inhibits both skeletal (RYR1) and cardiac (RYR2) ryanodine receptors (calcium release channels). Probably blocks ryanodine receptors by generating a lipid product. This is Phospholipase A2 imperatoxin-1 from Pandinus imperator (Emperor scorpion).